Consider the following 97-residue polypeptide: Large ribosomal subunit protein bL28 (97 aa).

This sequence belongs to the bacterial ribosomal protein bL28 family.

This Bartonella henselae (strain ATCC 49882 / DSM 28221 / CCUG 30454 / Houston 1) (Rochalimaea henselae) protein is Large ribosomal subunit protein bL28.